A 59-amino-acid polypeptide reads, in one-letter code: UPF0434 protein Noc_2677 (59 aa).

The protein belongs to the UPF0434 family.

This Nitrosococcus oceani (strain ATCC 19707 / BCRC 17464 / JCM 30415 / NCIMB 11848 / C-107) protein is UPF0434 protein Noc_2677.